The primary structure comprises 183 residues: NADH-quinone oxidoreductase subunit I (183 aa).

4Fe-4S ferredoxin-type domains lie at 44-74 (LNRW…VEAG) and 90-119 (RVYQ…MTNE). Residues Cys-54, Cys-57, Cys-60, Cys-64, Cys-99, Cys-102, Cys-105, and Cys-109 each contribute to the [4Fe-4S] cluster site. Positions 143 to 183 (QGMEAPPHPMRLGETEKDYYRLGRDDNAAARADEQNSEAVQ) are disordered. Positions 153–176 (RLGETEKDYYRLGRDDNAAARADE) are enriched in basic and acidic residues.

Belongs to the complex I 23 kDa subunit family. As to quaternary structure, NDH-1 is composed of 14 different subunits. Subunits NuoA, H, J, K, L, M, N constitute the membrane sector of the complex. [4Fe-4S] cluster serves as cofactor.

It is found in the cell membrane. It catalyses the reaction a quinone + NADH + 5 H(+)(in) = a quinol + NAD(+) + 4 H(+)(out). Functionally, NDH-1 shuttles electrons from NADH, via FMN and iron-sulfur (Fe-S) centers, to quinones in the respiratory chain. The immediate electron acceptor for the enzyme in this species is believed to be ubiquinone. Couples the redox reaction to proton translocation (for every two electrons transferred, four hydrogen ions are translocated across the cytoplasmic membrane), and thus conserves the redox energy in a proton gradient. The polypeptide is NADH-quinone oxidoreductase subunit I (Thermobifida fusca (strain YX)).